A 570-amino-acid chain; its full sequence is Sulfite reductase [NADPH] hemoprotein beta-component (570 aa).

The [4Fe-4S] cluster site is built by Cys-434, Cys-440, Cys-479, and Cys-483. Cys-483 lines the siroheme pocket.

Belongs to the nitrite and sulfite reductase 4Fe-4S domain family. In terms of assembly, alpha(8)-beta(8). The alpha component is a flavoprotein, the beta component is a hemoprotein. Siroheme serves as cofactor. [4Fe-4S] cluster is required as a cofactor.

It catalyses the reaction hydrogen sulfide + 3 NADP(+) + 3 H2O = sulfite + 3 NADPH + 4 H(+). The protein operates within sulfur metabolism; hydrogen sulfide biosynthesis; hydrogen sulfide from sulfite (NADPH route): step 1/1. Its function is as follows. Component of the sulfite reductase complex that catalyzes the 6-electron reduction of sulfite to sulfide. This is one of several activities required for the biosynthesis of L-cysteine from sulfate. This chain is Sulfite reductase [NADPH] hemoprotein beta-component, found in Escherichia coli (strain B / BL21-DE3).